Here is a 186-residue protein sequence, read N- to C-terminus: Dirigent protein 7 (186 aa).

Residues Met1–Ala21 form the signal peptide. 3 N-linked (GlcNAc...) asparagine glycosylation sites follow: Asn70, Asn91, and Asn126.

The protein belongs to the plant dirigent protein family. As to quaternary structure, homodimer.

It localises to the secreted. It is found in the extracellular space. The protein resides in the apoplast. In terms of biological role, dirigent proteins impart stereoselectivity on the phenoxy radical-coupling reaction, yielding optically active lignans from two molecules of coniferyl alcohol in the biosynthesis of lignans, flavonolignans, and alkaloids and thus plays a central role in plant secondary metabolism. In Arabidopsis thaliana (Mouse-ear cress), this protein is Dirigent protein 7 (DIR7).